The primary structure comprises 757 residues: 5-methyltetrahydropteroyltriglutamate--homocysteine methyltransferase (757 aa).

Residues 16 to 19 (RELK) and lysine 112 contribute to the 5-methyltetrahydropteroyltri-L-glutamate site. Residues 432-434 (IGS) and glutamate 485 contribute to the L-homocysteine site. Residues 432–434 (IGS) and glutamate 485 each bind L-methionine. 5-methyltetrahydropteroyltri-L-glutamate contacts are provided by residues 516–517 (RC) and tryptophan 562. Aspartate 600 contacts L-homocysteine. Aspartate 600 contacts L-methionine. A 5-methyltetrahydropteroyltri-L-glutamate-binding site is contributed by glutamate 606. The Zn(2+) site is built by histidine 642, cysteine 644, and glutamate 666. Histidine 695 (proton donor) is an active-site residue. Cysteine 727 is a Zn(2+) binding site.

Belongs to the vitamin-B12 independent methionine synthase family. Requires Zn(2+) as cofactor.

The catalysed reaction is 5-methyltetrahydropteroyltri-L-glutamate + L-homocysteine = tetrahydropteroyltri-L-glutamate + L-methionine. Its pathway is amino-acid biosynthesis; L-methionine biosynthesis via de novo pathway; L-methionine from L-homocysteine (MetE route): step 1/1. Functionally, catalyzes the transfer of a methyl group from 5-methyltetrahydrofolate to homocysteine resulting in methionine formation. This Actinobacillus pleuropneumoniae serotype 7 (strain AP76) protein is 5-methyltetrahydropteroyltriglutamate--homocysteine methyltransferase.